The primary structure comprises 378 residues: Dual-specificity RNA methyltransferase RlmN (378 aa).

The active-site Proton acceptor is the Glu-95. Residues 101 to 345 form the Radical SAM core domain; sequence EETRGTLCVS…TTIRKTRGDD (245 aa). A disulfide bridge connects residues Cys-108 and Cys-350. Residues Cys-115, Cys-119, and Cys-122 each contribute to the [4Fe-4S] cluster site. Residues 176-177, Ser-208, 230-232, and Asn-307 each bind S-adenosyl-L-methionine; these read GE and SLH. Cys-350 functions as the S-methylcysteine intermediate in the catalytic mechanism.

This sequence belongs to the radical SAM superfamily. RlmN family. Requires [4Fe-4S] cluster as cofactor.

The protein resides in the cytoplasm. It carries out the reaction adenosine(2503) in 23S rRNA + 2 reduced [2Fe-2S]-[ferredoxin] + 2 S-adenosyl-L-methionine = 2-methyladenosine(2503) in 23S rRNA + 5'-deoxyadenosine + L-methionine + 2 oxidized [2Fe-2S]-[ferredoxin] + S-adenosyl-L-homocysteine. The enzyme catalyses adenosine(37) in tRNA + 2 reduced [2Fe-2S]-[ferredoxin] + 2 S-adenosyl-L-methionine = 2-methyladenosine(37) in tRNA + 5'-deoxyadenosine + L-methionine + 2 oxidized [2Fe-2S]-[ferredoxin] + S-adenosyl-L-homocysteine. Its function is as follows. Specifically methylates position 2 of adenine 2503 in 23S rRNA and position 2 of adenine 37 in tRNAs. m2A2503 modification seems to play a crucial role in the proofreading step occurring at the peptidyl transferase center and thus would serve to optimize ribosomal fidelity. The chain is Dual-specificity RNA methyltransferase RlmN from Burkholderia pseudomallei (strain K96243).